The following is a 152-amino-acid chain: Large ribosomal subunit protein uL15 (152 aa).

The interval M1–G66 is disordered. Residues E24–N36 show a composition bias toward gly residues.

This sequence belongs to the universal ribosomal protein uL15 family. In terms of assembly, part of the 50S ribosomal subunit.

Functionally, binds to the 23S rRNA. This is Large ribosomal subunit protein uL15 from Akkermansia muciniphila (strain ATCC BAA-835 / DSM 22959 / JCM 33894 / BCRC 81048 / CCUG 64013 / CIP 107961 / Muc).